The primary structure comprises 209 residues: Probable GTP-binding protein EngB (209 aa).

The EngB-type G domain maps to glutamate 24 to leucine 198. GTP is bound by residues glycine 32–serine 39, glycine 59–leucine 63, aspartate 77–glycine 80, threonine 144–aspartate 147, and phenylalanine 177–alanine 179. Residues serine 39 and threonine 61 each contribute to the Mg(2+) site.

It belongs to the TRAFAC class TrmE-Era-EngA-EngB-Septin-like GTPase superfamily. EngB GTPase family. It depends on Mg(2+) as a cofactor.

Necessary for normal cell division and for the maintenance of normal septation. The polypeptide is Probable GTP-binding protein EngB (Thioalkalivibrio sulfidiphilus (strain HL-EbGR7)).